The following is a 106-amino-acid chain: MSAQQDNQMQGVQDPAAEGKGKGKAPEDNTVEESMDDDSSDESGAEEQVLEEPDEDNMEEIDTANVIGSRTRGKNIDFAKANQELGDDDEEDDDEDFVDPDDEMKD.

Polar residues predominate over residues 1-11; the sequence is MSAQQDNQMQG. Positions 1 to 106 are disordered; it reads MSAQQDNQMQ…FVDPDDEMKD (106 aa). The span at 17–27 shows a compositional bias: basic and acidic residues; that stretch reads AEGKGKGKAPE. 2 stretches are compositionally biased toward acidic residues: residues 29 to 62 and 85 to 106; these read NTVEESMDDDSSDESGAEEQVLEEPDEDNMEEID and LGDDDEEDDDEDFVDPDDEMKD.

Belongs to the CHZ1 family. Forms a heterotrimer with H2A.Z-H2B, stabilizing the association of the histone dimer. Also, with a lower affinity, forms a heterotrimer with H2A-H2B.

The protein localises to the nucleus. Its function is as follows. Forms a chaperone-bound H2A.Z-H2B complex that acts as a source for SWR1 complex-dependent H2A to H2A.Z histone replacement in chromatin. This is Histone H2A.Z-specific chaperone CHZ1 (CHZ1) from Phaeosphaeria nodorum (strain SN15 / ATCC MYA-4574 / FGSC 10173) (Glume blotch fungus).